The sequence spans 103 residues: Small ribosomal subunit protein uS10 (103 aa).

It belongs to the universal ribosomal protein uS10 family. In terms of assembly, part of the 30S ribosomal subunit.

In terms of biological role, involved in the binding of tRNA to the ribosomes. This chain is Small ribosomal subunit protein uS10, found in Pseudomonas savastanoi pv. phaseolicola (strain 1448A / Race 6) (Pseudomonas syringae pv. phaseolicola (strain 1448A / Race 6)).